The primary structure comprises 174 residues: Large ribosomal subunit protein bL17 (174 aa).

The protein belongs to the bacterial ribosomal protein bL17 family. Part of the 50S ribosomal subunit. Contacts protein L32.

This is Large ribosomal subunit protein bL17 from Ruminiclostridium cellulolyticum (strain ATCC 35319 / DSM 5812 / JCM 6584 / H10) (Clostridium cellulolyticum).